An 82-amino-acid polypeptide reads, in one-letter code: ATP synthase subunit c, chloroplastic (82 aa).

A run of 2 helical transmembrane segments spans residues isoleucine 4 to proline 24 and leucine 57 to alanine 77.

This sequence belongs to the ATPase C chain family. In terms of assembly, F-type ATPases have 2 components, F(1) - the catalytic core - and F(0) - the membrane proton channel. F(1) has five subunits: alpha(3), beta(3), gamma(1), delta(1), epsilon(1). F(0) has four main subunits: a(1), b(1), b'(1) and c(10-14). The alpha and beta chains form an alternating ring which encloses part of the gamma chain. F(1) is attached to F(0) by a central stalk formed by the gamma and epsilon chains, while a peripheral stalk is formed by the delta, b and b' chains.

The protein localises to the plastid. It localises to the chloroplast thylakoid membrane. In terms of biological role, f(1)F(0) ATP synthase produces ATP from ADP in the presence of a proton or sodium gradient. F-type ATPases consist of two structural domains, F(1) containing the extramembraneous catalytic core and F(0) containing the membrane proton channel, linked together by a central stalk and a peripheral stalk. During catalysis, ATP synthesis in the catalytic domain of F(1) is coupled via a rotary mechanism of the central stalk subunits to proton translocation. Its function is as follows. Key component of the F(0) channel; it plays a direct role in translocation across the membrane. A homomeric c-ring of between 10-14 subunits forms the central stalk rotor element with the F(1) delta and epsilon subunits. This is ATP synthase subunit c, chloroplastic from Thalassiosira pseudonana (Marine diatom).